The chain runs to 275 residues: NH(3)-dependent NAD(+) synthetase (275 aa).

An ATP-binding site is contributed by 50 to 57; it reads GISGGVDS. Asp56 provides a ligand contact to Mg(2+). A deamido-NAD(+)-binding site is contributed by Arg147. Thr167 is an ATP binding site. Glu172 contacts Mg(2+). Deamido-NAD(+) contacts are provided by Lys180 and Asp187. Residues Lys196 and Thr218 each coordinate ATP. 267-268 lines the deamido-NAD(+) pocket; it reads HK.

The protein belongs to the NAD synthetase family. As to quaternary structure, homodimer.

It catalyses the reaction deamido-NAD(+) + NH4(+) + ATP = AMP + diphosphate + NAD(+) + H(+). The protein operates within cofactor biosynthesis; NAD(+) biosynthesis; NAD(+) from deamido-NAD(+) (ammonia route): step 1/1. In terms of biological role, catalyzes the ATP-dependent amidation of deamido-NAD to form NAD. Uses ammonia as a nitrogen source. The chain is NH(3)-dependent NAD(+) synthetase from Pseudomonas fluorescens (strain Pf0-1).